The chain runs to 98 residues: NADH-ubiquinone oxidoreductase chain 4L (98 aa).

The next 3 membrane-spanning stretches (helical) occupy residues 1-21 (MSLT…GLLM), 29-49 (SLLC…ITIL), and 61-81 (IILL…LVMV).

It belongs to the complex I subunit 4L family. Core subunit of respiratory chain NADH dehydrogenase (Complex I) which is composed of 45 different subunits.

The protein resides in the mitochondrion inner membrane. The enzyme catalyses a ubiquinone + NADH + 5 H(+)(in) = a ubiquinol + NAD(+) + 4 H(+)(out). Core subunit of the mitochondrial membrane respiratory chain NADH dehydrogenase (Complex I) which catalyzes electron transfer from NADH through the respiratory chain, using ubiquinone as an electron acceptor. Part of the enzyme membrane arm which is embedded in the lipid bilayer and involved in proton translocation. The sequence is that of NADH-ubiquinone oxidoreductase chain 4L (MT-ND4L) from Artibeus jamaicensis (Jamaican fruit-eating bat).